Reading from the N-terminus, the 55-residue chain is Protein CADMIUM TOLERANCE 2 (55 aa).

The chain crosses the membrane as a helical span at residues 24 to 40 (GCLYACIFTALCCFCCY).

The protein belongs to the CYSTM1 family. In terms of tissue distribution, expressed only in roots.

It localises to the cell membrane. Its subcellular location is the secreted. The protein localises to the cell wall. In terms of biological role, confers resistance to heavy metal ions (e.g. cadmium (CdCl(2)) and copper (CuCl(2))) by chelating them at the plasma membrane of root cells, thus stopping their entry and reducing their accumulation. In Oryza sativa subsp. japonica (Rice), this protein is Protein CADMIUM TOLERANCE 2.